We begin with the raw amino-acid sequence, 107 residues long: Integration host factor subunit beta (107 aa).

Over residues 82 to 101 (PGKELRERVDRRAGEPLKAE) the composition is skewed to basic and acidic residues. The tract at residues 82 to 107 (PGKELRERVDRRAGEPLKAEDPDDDL) is disordered.

This sequence belongs to the bacterial histone-like protein family. In terms of assembly, heterodimer of an alpha and a beta chain.

In terms of biological role, this protein is one of the two subunits of integration host factor, a specific DNA-binding protein that functions in genetic recombination as well as in transcriptional and translational control. The chain is Integration host factor subunit beta from Paraburkholderia xenovorans (strain LB400).